The following is a 357-amino-acid chain: uncharacterized protein (357 aa).

The region spanning 27–242 (HFGNTVTFER…VSSVRLNFPK (216 aa)) is the Radical SAM core domain. Cys44, Cys50, and Cys53 together coordinate [4Fe-4S] cluster.

[4Fe-4S] cluster serves as cofactor.

This is an uncharacterized protein from Methanocaldococcus jannaschii (strain ATCC 43067 / DSM 2661 / JAL-1 / JCM 10045 / NBRC 100440) (Methanococcus jannaschii).